Reading from the N-terminus, the 600-residue chain is Aspartate--tRNA(Asp/Asn) ligase (600 aa).

L-aspartate is bound at residue Glu-175. An aspartate region spans residues 199 to 202 (QLFK). Residue Arg-221 coordinates L-aspartate. ATP-binding positions include 221-223 (RDE) and Gln-230. His-453 serves as a coordination point for L-aspartate. Residue Glu-487 participates in ATP binding. Arg-494 contributes to the L-aspartate binding site. Residue 539–542 (GWDR) participates in ATP binding. Residues 564–600 (GGVDPLTDAPAPITPLQRKESGIDAKPKAAENKPEEK) are disordered. A compositionally biased stretch (basic and acidic residues) spans 580–600 (QRKESGIDAKPKAAENKPEEK).

This sequence belongs to the class-II aminoacyl-tRNA synthetase family. Type 1 subfamily. As to quaternary structure, homodimer.

The protein resides in the cytoplasm. The enzyme catalyses tRNA(Asx) + L-aspartate + ATP = L-aspartyl-tRNA(Asx) + AMP + diphosphate. In terms of biological role, aspartyl-tRNA synthetase with relaxed tRNA specificity since it is able to aspartylate not only its cognate tRNA(Asp) but also tRNA(Asn). Reaction proceeds in two steps: L-aspartate is first activated by ATP to form Asp-AMP and then transferred to the acceptor end of tRNA(Asp/Asn). In Corynebacterium efficiens (strain DSM 44549 / YS-314 / AJ 12310 / JCM 11189 / NBRC 100395), this protein is Aspartate--tRNA(Asp/Asn) ligase.